The chain runs to 244 residues: Tabinhibitin 8 (244 aa).

The signal sequence occupies residues 1–23 (MTSILVSRFKISALTLQYATSDS). In terms of domain architecture, SCP spans 67-194 (YTGGGIIVLR…KTPLFFSSNC (128 aa)). Positions 143 to 145 (RGD) match the Cell attachment site motif.

It belongs to the CRISP family. As to expression, expressed in salivary glands.

The protein localises to the secreted. In terms of biological role, inhibits platelet aggregation induced by all agonists tested (ADP, arachidonic acid, the thromboxane A2 analog U46619, thrombin, and snake venom snaclecs (TMVA that activates platelet through GPIB, and stejnulxin that specifically acts through GPVI (GP6))). May act by competing with fibrinogen for binding to glycoprotein IIb/IIIa (ITGA2B/ITGB3). In Tabanus yao (Horsefly), this protein is Tabinhibitin 8.